Reading from the N-terminus, the 1327-residue chain is ABC transporter 1 (1327 aa).

Helical transmembrane passes span 47-67, 100-120, 170-190, 195-215, 228-248, and 276-296; these read LGIL…IIFG, VYVG…WNLF, KVGI…IAFV, LGGE…VGGY, VAGA…VHAF, and VAVQ…LAFW. The 280-residue stretch at 47-326 folds into the ABC transmembrane type-1 1 domain; that stretch reads LGILAAIASG…TTYTVIFLLV (280 aa). N381, N390, and N406 each carry an N-linked (GlcNAc...) asparagine glycan. In terms of domain architecture, ABC transporter 1 spans 386–663; that stretch reads IELNNVSFAF…DGAYAGLVRL (278 aa). 421-428 is an ATP binding site; it reads GLSGSGKS. N-linked (GlcNAc...) asparagine glycosylation is found at N463 and N674. 6 helical membrane-spanning segments follow: residues 743-763, 785-805, 859-881, 888-910, 971-991, and 1005-1025; these read FLAL…AVVF, FYGL…LGSW, LTGS…IALS, IALV…VITM, LWLA…YWWG, and FFIV…MFTL. The 289-residue stretch at 743 to 1031 folds into the ABC transmembrane type-1 2 domain; sequence FLALTSAFVV…MFTLAPDVSR (289 aa). N-linked (GlcNAc...) asparagine glycosylation is present at N1050. The interval 1054 to 1081 is disordered; sequence PCQHLKPGNDLEANAEPREKRPDQSQGG. An ABC transporter 2 domain is found at 1084-1323; sequence VSLNNVKFSY…SESYKINALH (240 aa). An ATP-binding site is contributed by 1119 to 1126; sequence GPSGAGKS.

It belongs to the ABC transporter superfamily. ABCB family. Multidrug resistance exporter (TC 3.A.1.201) subfamily.

The protein localises to the membrane. ABC transporter; part of the gene cluster that mediates the biosynthesis of hydroxamate-containing siderophores that play a critical role in virulence via intracellular iron acquisition during macrophage infection. Probably involved in the excretion of the extracellular siderophores. In Ajellomyces capsulatus (Darling's disease fungus), this protein is ABC transporter 1.